Here is a 504-residue protein sequence, read N- to C-terminus: Probable cytosol aminopeptidase (504 aa).

2 residues coordinate Mn(2+): lysine 274 and aspartate 279. Residue lysine 286 is part of the active site. Positions 297, 356, and 358 each coordinate Mn(2+). The active site involves arginine 360.

This sequence belongs to the peptidase M17 family. It depends on Mn(2+) as a cofactor.

Its subcellular location is the cytoplasm. The catalysed reaction is Release of an N-terminal amino acid, Xaa-|-Yaa-, in which Xaa is preferably Leu, but may be other amino acids including Pro although not Arg or Lys, and Yaa may be Pro. Amino acid amides and methyl esters are also readily hydrolyzed, but rates on arylamides are exceedingly low.. The enzyme catalyses Release of an N-terminal amino acid, preferentially leucine, but not glutamic or aspartic acids.. In terms of biological role, presumably involved in the processing and regular turnover of intracellular proteins. Catalyzes the removal of unsubstituted N-terminal amino acids from various peptides. This chain is Probable cytosol aminopeptidase, found in Blochmanniella floridana.